Reading from the N-terminus, the 321-residue chain is Viral T-cell receptor beta chain-like T17T-22 (321 aa).

Residues 1–28 form the signal peptide; sequence MISWLPSVAMGSRLLCCVALCLLGAGPA. The interval 29–122 is v segment; it reads DSGLTQTPRH…DSALYLCASS (94 aa). Asn105 carries an N-linked (GlcNAc...) asparagine; by host glycan. The segment at 123–128 is d segment; it reads PNEDSE. The j segment stretch occupies residues 129–144; sequence YGETLYFGEGSRLTVV. The tract at residues 145–321 is c region; the sequence is EDLKKVSPPK…LMAKVKRKDS (177 aa). N-linked (GlcNAc...) asparagine; by host glycosylation is found at Asn214 and Asn264.

In Feline leukemia virus, this protein is Viral T-cell receptor beta chain-like T17T-22 (V-TCR).